The primary structure comprises 362 residues: Protein Wnt-16 (362 aa).

A signal peptide spans 1 to 29 (MDRAALLGLSRLCALWAAVLALFPCGAQG). Disulfide bonds link Cys81/Cys92, Cys136/Cys144, and Cys146/Cys165. A glycan (N-linked (GlcNAc...) asparagine) is linked at Asn140. Residue Asn186 is glycosylated (N-linked (GlcNAc...) asparagine). 8 disulfide bridges follow: Cys218-Cys232, Cys220-Cys227, Cys291-Cys322, Cys307-Cys317, Cys321-Cys361, Cys337-Cys352, Cys339-Cys349, and Cys344-Cys345. Residue Ser224 is the site of O-palmitoleoyl serine; by PORCN attachment. N-linked (GlcNAc...) asparagine glycosylation occurs at Asn308.

Belongs to the Wnt family. Post-translationally, palmitoleoylation is required for efficient binding to frizzled receptors. Depalmitoleoylation leads to Wnt signaling pathway inhibition.

It localises to the secreted. The protein resides in the extracellular space. The protein localises to the extracellular matrix. Its function is as follows. Ligand for members of the frizzled family of seven transmembrane receptors. Probable developmental protein. May be a signaling molecule which affects the development of discrete regions of tissues. Is likely to signal over only few cell diameters. The chain is Protein Wnt-16 (WNT16) from Bos taurus (Bovine).